The following is a 352-amino-acid chain: MGLYKTKSKRSIANYHHIIIINIFILSSITSSSMASSSSPSSIDFSTAILIRVDQSGKGDFSKIQEAIESIPPNLNNSQLYFIWVKPGIYREKVVIPAEKPYITLSGTQASNTFLIWSDGEDILESPTLTIFASDFVCRFLTIQNKFGTAGRAVALRVAADKAAFYGCVITSYQDTLLDDNGNHYFKNCYIEGATDFICGSASSLYERCHLHSLSPNNGSITAQMRTSATEKSGFTFLGCKLTGSGSTFLGRPWGAYSRVVFAYSFFSNVVAPQGWNQWGDSTKENTVYYGEYKCYGPGADREQRVEWSKQLSDEEATVFLSKDFIGGKDWLRPAPSHFKNAPKQTQNKEIN.

Residues 13 to 35 form a helical membrane-spanning segment; that stretch reads ANYHHIIIINIFILSSITSSSMA. The N-linked (GlcNAc...) asparagine glycan is linked to Asn-76. Asp-175 functions as the Proton donor in the catalytic mechanism. Asp-196 serves as the catalytic Nucleophile. The N-linked (GlcNAc...) asparagine glycan is linked to Asn-218. Substrate-binding residues include Arg-252 and Trp-254. The tract at residues 332–352 is disordered; it reads LRPAPSHFKNAPKQTQNKEIN. Residues 343-352 show a composition bias toward polar residues; it reads PKQTQNKEIN.

This sequence belongs to the pectinesterase family.

The protein localises to the membrane. The enzyme catalyses [(1-&gt;4)-alpha-D-galacturonosyl methyl ester](n) + n H2O = [(1-&gt;4)-alpha-D-galacturonosyl](n) + n methanol + n H(+). It functions in the pathway glycan metabolism; pectin degradation; 2-dehydro-3-deoxy-D-gluconate from pectin: step 1/5. Its function is as follows. Acts in the modification of cell walls via demethylesterification of cell wall pectin. The chain is Putative pectinesterase 11 (PME11) from Arabidopsis thaliana (Mouse-ear cress).